The following is a 349-amino-acid chain: N-acetyltaurine hydrolase (349 aa).

His26, His28, Glu169, His201, His230, and Asp298 together coordinate a divalent metal cation.

It belongs to the metallo-dependent hydrolases superfamily. Phosphotriesterase family. It depends on a divalent metal cation as a cofactor.

Its subcellular location is the cytoplasm. The protein resides in the cytosol. The catalysed reaction is N-acetyltaurine + H2O = taurine + acetate. It carries out the reaction N-propanoyltaurine + H2O = propanoate + taurine. The enzyme catalyses N-acetyl-L-methionine + H2O = L-methionine + acetate. It catalyses the reaction N-acetyl-L-isoleucine + H2O = L-isoleucine + acetate. The catalysed reaction is N-acetyl-L-leucine + H2O = L-leucine + acetate. It carries out the reaction N-acetyl-L-valine + H2O = L-valine + acetate. Functionally, N-acetyltaurine hydrolase that catalyzes the hydrolysis of N-acetyltaurine into taurine and acetate. PTER also acts on other N-acetyl amino acids (Met, Ile, Leu, Val) and N-propionyltaurine, but at lower rates. This is N-acetyltaurine hydrolase (pter) from Salmo salar (Atlantic salmon).